A 341-amino-acid chain; its full sequence is Anthranilate phosphoribosyltransferase (341 aa).

5-phospho-alpha-D-ribose 1-diphosphate-binding positions include Gly-79, 82 to 83 (GD), Thr-87, 89 to 92 (NIST), 107 to 115 (KHGNRAASS), and Ala-119. Gly-79 lines the anthranilate pocket. Residue Ser-91 participates in Mg(2+) binding. Anthranilate is bound at residue Asn-110. Residue Arg-165 coordinates anthranilate. Mg(2+) contacts are provided by Asp-224 and Glu-225.

This sequence belongs to the anthranilate phosphoribosyltransferase family. Homodimer. The cofactor is Mg(2+).

The catalysed reaction is N-(5-phospho-beta-D-ribosyl)anthranilate + diphosphate = 5-phospho-alpha-D-ribose 1-diphosphate + anthranilate. Its pathway is amino-acid biosynthesis; L-tryptophan biosynthesis; L-tryptophan from chorismate: step 2/5. Its function is as follows. Catalyzes the transfer of the phosphoribosyl group of 5-phosphorylribose-1-pyrophosphate (PRPP) to anthranilate to yield N-(5'-phosphoribosyl)-anthranilate (PRA). The polypeptide is Anthranilate phosphoribosyltransferase (Lacticaseibacillus paracasei (strain ATCC 334 / BCRC 17002 / CCUG 31169 / CIP 107868 / KCTC 3260 / NRRL B-441) (Lactobacillus paracasei)).